The following is a 427-amino-acid chain: Putative acyl-CoA thioester hydrolase YbhC (427 aa).

Positions 1 to 21 are cleaved as a signal peptide; that stretch reads MNTFSVSRLALALAFGVTLTA. Cysteine 22 is lipidated: N-palmitoyl cysteine. The S-diacylglycerol cysteine moiety is linked to residue cysteine 22. The disordered stretch occupies residues 23–42; the sequence is SSTPPDQRPSDQTAPGTSSR. Residues cysteine 185 and cysteine 197 are joined by a disulfide bond. Residue aspartate 285 is the Nucleophile of the active site. Residue arginine 345 participates in substrate binding.

This sequence belongs to the pectinesterase family.

The protein resides in the cell outer membrane. Its function is as follows. Putative thioesterase. Does not bind pectin, and has no pectinesterase activity. The polypeptide is Putative acyl-CoA thioester hydrolase YbhC (ybhC) (Escherichia coli (strain K12)).